A 133-amino-acid chain; its full sequence is Homeobox protein BarH-like 2 (133 aa).

A DNA-binding region (homeobox) is located at residues 1 to 46; sequence ELEKEFQKQKYLSTPDRLDLAQSLGLTQLQVKTWYQNRRMKWKKMV. The disordered stretch occupies residues 45-133; that stretch reads MVLKGGQEAP…VTSPEPPPSS (89 aa).

It belongs to the BAR homeobox family. In terms of tissue distribution, expressed in keratinizing epithelia such as wool follicle, tongue and esophagus. Expressed at low level in thymus. Not detected in spleen, skeletal muscle, brain, heart kidney, liver and lung.

It localises to the nucleus. Transcription factor. Binds optimally to the DNA consensus sequence 5'-YYTAATGRTTTTY-3'. May control the expression of neural adhesion molecules such as L1 or Ng-CAM during embryonic development of both the central and peripherical nervous system. May be involved in controlling adhesive processes in keratinizing epithelia. The sequence is that of Homeobox protein BarH-like 2 (BARX2) from Ovis aries (Sheep).